A 178-amino-acid polypeptide reads, in one-letter code: ATP synthase subunit delta (178 aa).

The protein belongs to the ATPase delta chain family. F-type ATPases have 2 components, F(1) - the catalytic core - and F(0) - the membrane proton channel. F(1) has five subunits: alpha(3), beta(3), gamma(1), delta(1), epsilon(1). F(0) has three main subunits: a(1), b(2) and c(10-14). The alpha and beta chains form an alternating ring which encloses part of the gamma chain. F(1) is attached to F(0) by a central stalk formed by the gamma and epsilon chains, while a peripheral stalk is formed by the delta and b chains.

It localises to the cell inner membrane. Its function is as follows. F(1)F(0) ATP synthase produces ATP from ADP in the presence of a proton or sodium gradient. F-type ATPases consist of two structural domains, F(1) containing the extramembraneous catalytic core and F(0) containing the membrane proton channel, linked together by a central stalk and a peripheral stalk. During catalysis, ATP synthesis in the catalytic domain of F(1) is coupled via a rotary mechanism of the central stalk subunits to proton translocation. Functionally, this protein is part of the stalk that links CF(0) to CF(1). It either transmits conformational changes from CF(0) to CF(1) or is implicated in proton conduction. In Acinetobacter baumannii (strain SDF), this protein is ATP synthase subunit delta.